The primary structure comprises 85 residues: Large ribosomal subunit protein bL27 (85 aa).

A disordered region spans residues 1–21; it reads MAHKKGVGSSRNGRDSDGQRL.

This sequence belongs to the bacterial ribosomal protein bL27 family.

This Geobacter sp. (strain M21) protein is Large ribosomal subunit protein bL27.